The chain runs to 1266 residues: TBC1 domain family member 9 (1266 aa).

GRAM domains follow at residues 146-213 (VKFH…EKNA) and 293-361 (ERYR…EKAD). A disordered region spans residues 415–456 (SYNSSDDEVYSRPSSLVSSSPQRSTSSDADGERQFNLNGNSV). Residues 425–441 (SRPSSLVSSSPQRSTSS) are compositionally biased toward low complexity. The region spanning 515 to 702 (GIPESMRGEL…VVVDCFFYEG (188 aa)) is the Rab-GAP TBC domain. An EF-hand domain is found at 886 to 921 (HSDVLASRLFQLLDENGDSLINFREFVSGLSAACHG). Disordered stretches follow at residues 1075-1095 (AKEG…PGVL) and 1132-1164 (DIKL…SMSS).

Functionally, may act as a GTPase-activating protein for Rab family protein(s). In Homo sapiens (Human), this protein is TBC1 domain family member 9 (TBC1D9).